An 84-amino-acid chain; its full sequence is Large ribosomal subunit protein bL27 (84 aa).

The disordered stretch occupies residues 1 to 21; the sequence is MAHKKGQGSTRNGRDSHSKRL. Over residues 12 to 21 the composition is skewed to basic and acidic residues; the sequence is NGRDSHSKRL.

Belongs to the bacterial ribosomal protein bL27 family.

The polypeptide is Large ribosomal subunit protein bL27 (Methylacidiphilum infernorum (isolate V4) (Methylokorus infernorum (strain V4))).